A 444-amino-acid chain; its full sequence is D(2) dopamine receptor (444 aa).

The Extracellular segment spans residues 1–37; that stretch reads MDPLNLSWYDDDPESRNWSRPFNGSEGKADRPPYNYY. N-linked (GlcNAc...) asparagine glycosylation is found at N5, N17, and N23. The helical transmembrane segment at 38 to 60 threads the bilayer; that stretch reads AMLLTLLIFVIVFGNVLVCMAVS. Topologically, residues 61–70 are cytoplasmic; sequence REKALQTTTN. Residues 71 to 93 traverse the membrane as a helical segment; sequence YLIVSLAVADLLVATLVMPWVVY. At 94-108 the chain is on the extracellular side; sequence LEVVGEWKFSRIHCD. Residues C107 and C182 are joined by a disulfide bond. A helical membrane pass occupies residues 109–130; the sequence is IFVTLDVMMCTASILNLCAISI. The Cytoplasmic portion of the chain corresponds to 131–151; it reads DRYTAVAMPMLYNTRYSSKRR. A helical transmembrane segment spans residues 152-172; that stretch reads VTVMIAIVWVLSFTISCPMLF. The Extracellular portion of the chain corresponds to 173 to 188; that stretch reads GLNNTDQNECIIANPA. Residues 189–213 traverse the membrane as a helical segment; it reads FVVYSSIVSFYVPFIVTLLVYIKIY. Residues 211-374 form an interaction with PPP1R9B region; sequence KIYIVLRRRR…SQQKEKKATQ (164 aa). Topologically, residues 214–374 are cytoplasmic; it reads IVLRRRRKRV…SQQKEKKATQ (161 aa). The interval 281-332 is disordered; it reads MEMLSSTSPPERTRYSPIPPSHHQLTLPDPSHHGLHSTPDSPAKPEKNGHAK. The chain crosses the membrane as a helical span at residues 375–396; it reads MLAIVLGVFIICWLPFFITHIL. At 397–410 the chain is on the extracellular side; it reads NIHCDCNIPPVLYS. Cysteines 400 and 402 form a disulfide. The helical transmembrane segment at 411-432 threads the bilayer; it reads AFTWLGYVNSAVNPIIYTTFNI. Topologically, residues 433–444 are cytoplasmic; the sequence is EFRKAFLKILHC. C444 carries S-palmitoyl cysteine lipidation.

This sequence belongs to the G-protein coupled receptor 1 family. In terms of assembly, forms homo- and heterooligomers with DRD4. The interaction with DRD4 may modulate agonist-induced downstream signaling. Interacts with CADPS and CADPS2. Interacts with GPRASP1, PPP1R9B and CLIC6. Interacts with ARRB2. Interacts with HTR2A. Interacts with DRD1. Interacts with KCNA2. Palmitoylated. Palmitoylation which is required for proper localization to the plasma membrane and stability of the receptor could be carried on by ZDHHC4, ZDHHC3 and ZDHHC8.

It is found in the cell membrane. The protein localises to the golgi apparatus membrane. Functionally, dopamine receptor whose activity is mediated by G proteins which inhibit adenylyl cyclase. Positively regulates postnatal regression of retinal hyaloid vessels via suppression of VEGFR2/KDR activity, downstream of OPN5. The polypeptide is D(2) dopamine receptor (DRD2) (Bos taurus (Bovine)).